Reading from the N-terminus, the 411-residue chain is Dual-specificity RNA methyltransferase RlmN (411 aa).

Glu124 serves as the catalytic Proton acceptor. The region spanning 130-379 is the Radical SAM core domain; it reads EEGRGTLCIS…IRTPRGRDIL (250 aa). A disulfide bridge connects residues Cys137 and Cys382. Cys144, Cys148, and Cys151 together coordinate [4Fe-4S] cluster. S-adenosyl-L-methionine-binding positions include 208–209, Ser240, 262–264, and Asn339; these read GE and SLH. Cys382 (S-methylcysteine intermediate) is an active-site residue.

It belongs to the radical SAM superfamily. RlmN family. Requires [4Fe-4S] cluster as cofactor.

Its subcellular location is the cytoplasm. The enzyme catalyses adenosine(2503) in 23S rRNA + 2 reduced [2Fe-2S]-[ferredoxin] + 2 S-adenosyl-L-methionine = 2-methyladenosine(2503) in 23S rRNA + 5'-deoxyadenosine + L-methionine + 2 oxidized [2Fe-2S]-[ferredoxin] + S-adenosyl-L-homocysteine. It catalyses the reaction adenosine(37) in tRNA + 2 reduced [2Fe-2S]-[ferredoxin] + 2 S-adenosyl-L-methionine = 2-methyladenosine(37) in tRNA + 5'-deoxyadenosine + L-methionine + 2 oxidized [2Fe-2S]-[ferredoxin] + S-adenosyl-L-homocysteine. Its function is as follows. Specifically methylates position 2 of adenine 2503 in 23S rRNA and position 2 of adenine 37 in tRNAs. m2A2503 modification seems to play a crucial role in the proofreading step occurring at the peptidyl transferase center and thus would serve to optimize ribosomal fidelity. The polypeptide is Dual-specificity RNA methyltransferase RlmN (Sinorhizobium fredii (strain NBRC 101917 / NGR234)).